A 329-amino-acid polypeptide reads, in one-letter code: L-arabinose-binding periplasmic protein (329 aa).

The signal sequence occupies residues 1 to 23 (MHKFTKALAAIGLAAVMSQSAMA).

It belongs to the bacterial solute-binding protein 2 family.

The protein localises to the periplasm. In terms of biological role, involved in the high-affinity L-arabinose membrane transport system. Binds with high affinity to arabinose, but can also bind D-galactose (approximately 2-fold reduction) and D-fucose (approximately 40-fold reduction). This is L-arabinose-binding periplasmic protein (araF) from Escherichia coli (strain K12).